Consider the following 148-residue polypeptide: uncharacterized protein (148 aa).

The span at 1–17 shows a compositional bias: polar residues; that stretch reads MEGLQRSTISFRRQGSS. The interval 1-148 is disordered; it reads MEGLQRSTIS…SRRRIVTKKR (148 aa). Basic and acidic residues-rich tracts occupy residues 36-47 and 58-67; these read EQKDESQRDEQP and KPIDEKDKLR. S100 and S107 each carry phosphoserine. A compositionally biased stretch (basic residues) spans 128-148; sequence VNPRKRPPKRRSRRRIVTKKR.

This is an uncharacterized protein from Arabidopsis thaliana (Mouse-ear cress).